Here is a 62-residue protein sequence, read N- to C-terminus: Large ribosomal subunit protein bL28 (62 aa).

The protein belongs to the bacterial ribosomal protein bL28 family.

The polypeptide is Large ribosomal subunit protein bL28 (Thermoanaerobacter sp. (strain X514)).